Consider the following 797-residue polypeptide: Ent-atiserene synthase KSL1, chloroplastic (797 aa).

The transit peptide at 1–48 (LVKDDMSLILSSFSLFRSSRSSPASASLAGSGHPRTTPPKIASLQSPM) directs the protein to the chloroplast. The segment covering 21–32 (SSPASASLAGSG) has biased composition (low complexity). A disordered region spans residues 21–47 (SSPASASLAGSGHPRTTPPKIASLQSP). Residues Asp547, Asp551, Asn691, and Glu699 each contribute to the Mg(2+) site. The DDXXD motif motif lies at 547–551 (DDLFD).

This sequence belongs to the terpene synthase family. Mg(2+) serves as cofactor.

It is found in the plastid. It localises to the chloroplast. It carries out the reaction ent-copalyl diphosphate = ent-atiserene + diphosphate. It participates in secondary metabolite biosynthesis; terpenoid biosynthesis. Involved in the biosynthesis of ent-kaurene diterpenoids natural products such as oridonin, miltiradiene, eriocalyxin B and nezukol, known to exhibit antitumor, anti-inflammatory and antibacterial activities. Catalyzes the conversion of ent-copalyl diphosphate (ent-CPP) to ent-atiserene. This chain is Ent-atiserene synthase KSL1, chloroplastic, found in Isodon japonicus (Scutellaria japonica).